The sequence spans 320 residues: tRNA(Ile)-lysidine synthase (320 aa).

33–38 (SGGPDS) is a binding site for ATP.

This sequence belongs to the tRNA(Ile)-lysidine synthase family.

Its subcellular location is the cytoplasm. It carries out the reaction cytidine(34) in tRNA(Ile2) + L-lysine + ATP = lysidine(34) in tRNA(Ile2) + AMP + diphosphate + H(+). In terms of biological role, ligates lysine onto the cytidine present at position 34 of the AUA codon-specific tRNA(Ile) that contains the anticodon CAU, in an ATP-dependent manner. Cytidine is converted to lysidine, thus changing the amino acid specificity of the tRNA from methionine to isoleucine. This Mycolicibacterium paratuberculosis (strain ATCC BAA-968 / K-10) (Mycobacterium paratuberculosis) protein is tRNA(Ile)-lysidine synthase.